A 224-amino-acid chain; its full sequence is Ribosomal RNA large subunit methyltransferase E (224 aa).

The S-adenosyl-L-methionine site is built by G64, W66, D97, D113, and D138. The Proton acceptor role is filled by K178.

It belongs to the class I-like SAM-binding methyltransferase superfamily. RNA methyltransferase RlmE family.

It is found in the cytoplasm. It catalyses the reaction uridine(2552) in 23S rRNA + S-adenosyl-L-methionine = 2'-O-methyluridine(2552) in 23S rRNA + S-adenosyl-L-homocysteine + H(+). In terms of biological role, specifically methylates the uridine in position 2552 of 23S rRNA at the 2'-O position of the ribose in the fully assembled 50S ribosomal subunit. The chain is Ribosomal RNA large subunit methyltransferase E from Albidiferax ferrireducens (strain ATCC BAA-621 / DSM 15236 / T118) (Rhodoferax ferrireducens).